Consider the following 943-residue polypeptide: Isoleucine--tRNA ligase (943 aa).

The 'HIGH' region signature appears at 59–69 (PYANGQIHLGH). An L-isoleucyl-5'-AMP-binding site is contributed by glutamate 577. Residues 618 to 622 (KMSKS) carry the 'KMSKS' region motif. An ATP-binding site is contributed by lysine 621. The Zn(2+) site is built by cysteine 906, cysteine 909, cysteine 926, and cysteine 929.

Belongs to the class-I aminoacyl-tRNA synthetase family. IleS type 1 subfamily. In terms of assembly, monomer. It depends on Zn(2+) as a cofactor.

It is found in the cytoplasm. It carries out the reaction tRNA(Ile) + L-isoleucine + ATP = L-isoleucyl-tRNA(Ile) + AMP + diphosphate. Its function is as follows. Catalyzes the attachment of isoleucine to tRNA(Ile). As IleRS can inadvertently accommodate and process structurally similar amino acids such as valine, to avoid such errors it has two additional distinct tRNA(Ile)-dependent editing activities. One activity is designated as 'pretransfer' editing and involves the hydrolysis of activated Val-AMP. The other activity is designated 'posttransfer' editing and involves deacylation of mischarged Val-tRNA(Ile). The polypeptide is Isoleucine--tRNA ligase (Xanthomonas campestris pv. campestris (strain 8004)).